The following is a 41-amino-acid chain: Large ribosomal subunit protein bL36 (41 aa).

Belongs to the bacterial ribosomal protein bL36 family.

In Rhodopseudomonas palustris (strain BisA53), this protein is Large ribosomal subunit protein bL36.